A 78-amino-acid polypeptide reads, in one-letter code: MAQQRRGGRRRRKVDYIAANHIEYIDYKDTDLLRRFISERGKILPRRVTGTSAKNQRKLTVAIKRARIMGLLPFVAED.

Belongs to the bacterial ribosomal protein bS18 family. As to quaternary structure, part of the 30S ribosomal subunit. Forms a tight heterodimer with protein bS6.

In terms of biological role, binds as a heterodimer with protein bS6 to the central domain of the 16S rRNA, where it helps stabilize the platform of the 30S subunit. The polypeptide is Small ribosomal subunit protein bS18 (Ligilactobacillus salivarius (strain UCC118) (Lactobacillus salivarius)).